Reading from the N-terminus, the 352-residue chain is Rhodopsin (352 aa).

The Extracellular portion of the chain corresponds to 1–36 (MNGTEGPFFYIPMVNTTGIVRSPYEYPQYYLVNPAA). Residues Asn-2 and Asn-15 are each glycosylated (N-linked (GlcNAc...) asparagine). A helical membrane pass occupies residues 37-61 (YACLGAYMFFLILVGFPVNFLTLYV). At 62-73 (TLEHKKLRTPLN) the chain is on the cytoplasmic side. A helical transmembrane segment spans residues 74–96 (YILLNLAVADLFMVFGGFTTTMY). Topologically, residues 97–110 (TSMHGYFVLGRLGC) are extracellular. Cys-110 and Cys-187 form a disulfide bridge. The chain crosses the membrane as a helical span at residues 111–133 (NIEGFFATLGGEIALWSLVVLAI). Residues 134-136 (ERW) carry the 'Ionic lock' involved in activated form stabilization motif. Residues 134 to 152 (ERWVVVCKPISNFRFGENH) are Cytoplasmic-facing. Residues 153–173 (AIMGVAFTWFMASACAVPPLV) traverse the membrane as a helical segment. Over 174–202 (GWSRYIPEGMQCSCGVDYYTRAEGFNNES) the chain is Extracellular. Asn-200 carries N-linked (GlcNAc...) asparagine glycosylation. The helical transmembrane segment at 203–224 (FVIYMFIVHFCIPLAVVGFCYG) threads the bilayer. The Cytoplasmic segment spans residues 225-252 (RLLCAVKEAAAAQQESETTQRAEREVSR). A helical transmembrane segment spans residues 253 to 274 (MVVIMVIGFLVCWLPYASVAWY). Residues 275-286 (IFTHQGSEFGPP) lie on the Extracellular side of the membrane. A helical transmembrane segment spans residues 287–308 (FMTVPAFFAKSSSIYNPMIYIC). Residue Lys-296 is modified to N6-(retinylidene)lysine. Topologically, residues 309–352 (MNKQFRHCMITTLCCGKNPFEEEEGASTTKTEASSVSSSSVSPA) are cytoplasmic. S-palmitoyl cysteine attachment occurs at residues Cys-322 and Cys-323. The interval 331–352 (EEGASTTKTEASSVSSSSVSPA) is disordered. The span at 342–352 (SSVSSSSVSPA) shows a compositional bias: low complexity.

It belongs to the G-protein coupled receptor 1 family. Opsin subfamily. Phosphorylated on some or all of the serine and threonine residues present in the C-terminal region. Post-translationally, contains one covalently linked retinal chromophore.

It localises to the membrane. Its subcellular location is the cell projection. The protein localises to the cilium. The protein resides in the photoreceptor outer segment. Functionally, photoreceptor required for image-forming vision at low light intensity. While most salt water fish species use retinal as chromophore, most freshwater fish use 3-dehydroretinal, or a mixture of retinal and 3-dehydroretinal. Light-induced isomerization of 11-cis to all-trans retinal triggers a conformational change that activates signaling via G-proteins. Subsequent receptor phosphorylation mediates displacement of the bound G-protein alpha subunit by arrestin and terminates signaling. The protein is Rhodopsin (rho) of Zosterisessor ophiocephalus (Grass goby).